Here is a 204-residue protein sequence, read N- to C-terminus: dITP/XTP pyrophosphatase (204 aa).

Substrate is bound at residue T8–K13. D70 acts as the Proton acceptor in catalysis. D70 contributes to the Mg(2+) binding site. Substrate is bound by residues S71, F153–D156, K176, and H181–R182.

Belongs to the HAM1 NTPase family. In terms of assembly, homodimer. Requires Mg(2+) as cofactor.

It carries out the reaction XTP + H2O = XMP + diphosphate + H(+). The enzyme catalyses dITP + H2O = dIMP + diphosphate + H(+). It catalyses the reaction ITP + H2O = IMP + diphosphate + H(+). In terms of biological role, pyrophosphatase that catalyzes the hydrolysis of nucleoside triphosphates to their monophosphate derivatives, with a high preference for the non-canonical purine nucleotides XTP (xanthosine triphosphate), dITP (deoxyinosine triphosphate) and ITP. Seems to function as a house-cleaning enzyme that removes non-canonical purine nucleotides from the nucleotide pool, thus preventing their incorporation into DNA/RNA and avoiding chromosomal lesions. In Geobacillus kaustophilus (strain HTA426), this protein is dITP/XTP pyrophosphatase.